The following is a 431-amino-acid chain: Glucose-1-phosphate adenylyltransferase (431 aa).

Lysine 39 contributes to the beta-D-fructose 1,6-bisphosphate binding site. Positions 40, 46, and 52 each coordinate AMP. Tyrosine 114 is a binding site for alpha-D-glucose 1-phosphate. Arginine 130 is a binding site for AMP. Alpha-D-glucose 1-phosphate-binding positions include glycine 179, 194–195 (EK), and serine 212. The AMP site is built by glutamate 370 and arginine 386. Residues 419-423 (REMLR) and 429-431 (QER) contribute to the beta-D-fructose 1,6-bisphosphate site.

The protein belongs to the bacterial/plant glucose-1-phosphate adenylyltransferase family. As to quaternary structure, homotetramer.

It catalyses the reaction alpha-D-glucose 1-phosphate + ATP + H(+) = ADP-alpha-D-glucose + diphosphate. It functions in the pathway glycan biosynthesis; glycogen biosynthesis. Its activity is regulated as follows. Allosterically activated by fructose-1,6-bisphosphate (F16BP) and inhibited by AMP. Its function is as follows. Involved in the biosynthesis of ADP-glucose, a building block required for the elongation reactions to produce glycogen. Catalyzes the reaction between ATP and alpha-D-glucose 1-phosphate (G1P) to produce pyrophosphate and ADP-Glc. This chain is Glucose-1-phosphate adenylyltransferase, found in Shigella boydii serotype 18 (strain CDC 3083-94 / BS512).